Consider the following 432-residue polypeptide: N-acylneuraminate cytidylyltransferase (432 aa).

Met-1 bears the N-acetylmethionine mark. Residues 1-38 (MDALEKGAVTSGPAPRGRPSRGRPPKLQRSRGAGRGLE) are disordered. A BC1 motif motif is present at residues 15 to 31 (PRGRPSRGRPPKLQRSR). The span at 18-29 (RPSRGRPPKLQR) shows a compositional bias: basic residues. Residues Arg-35 and Arg-50 each carry the omega-N-methylarginine modification. The substrate site is built by Arg-50, Asn-60, Arg-109, Ser-118, Ser-120, and Gln-141. Residues 198-204 (KRPRRQD) carry the BC2 motif motif. Arg-199 is a catalytic residue. The short motif at 267–274 (KEKLKEIK) is the BC3 motif element.

The protein belongs to the CMP-NeuNAc synthase family. As to quaternary structure, homotetramer; the active enzyme is formed by a dimer of dimers. As to expression, highly expressed in brain and heart, and at intermediate level muscle and liver.

The protein resides in the nucleus. It catalyses the reaction an N-acylneuraminate + CTP = a CMP-N-acyl-beta-neuraminate + diphosphate. Its pathway is amino-sugar metabolism; N-acetylneuraminate metabolism. In terms of biological role, catalyzes the activation of N-acetylneuraminic acid (NeuNAc) to cytidine 5'-monophosphate N-acetylneuraminic acid (CMP-NeuNAc), a substrate required for the addition of sialic acid. Has some activity toward NeuNAc, N-glycolylneuraminic acid (Neu5Gc) or 2-keto-3-deoxy-D-glycero-D-galacto-nononic acid (KDN). This chain is N-acylneuraminate cytidylyltransferase (Cmas), found in Mus musculus (Mouse).